A 371-amino-acid chain; its full sequence is Queuine tRNA-ribosyltransferase (371 aa).

Asp-90 functions as the Proton acceptor in the catalytic mechanism. Residues 90–94 (DSGGF), Asp-144, Gln-188, and Gly-215 each bind substrate. The segment at 246 to 252 (GVGTPED) is RNA binding. Residue Asp-265 is the Nucleophile of the active site. The segment at 270–274 (TRNAR) is RNA binding; important for wobble base 34 recognition. Cys-303, Cys-305, Cys-308, and His-334 together coordinate Zn(2+).

It belongs to the queuine tRNA-ribosyltransferase family. As to quaternary structure, homodimer. Within each dimer, one monomer is responsible for RNA recognition and catalysis, while the other monomer binds to the replacement base PreQ1. Requires Zn(2+) as cofactor.

It catalyses the reaction 7-aminomethyl-7-carbaguanine + guanosine(34) in tRNA = 7-aminomethyl-7-carbaguanosine(34) in tRNA + guanine. The protein operates within tRNA modification; tRNA-queuosine biosynthesis. Catalyzes the base-exchange of a guanine (G) residue with the queuine precursor 7-aminomethyl-7-deazaguanine (PreQ1) at position 34 (anticodon wobble position) in tRNAs with GU(N) anticodons (tRNA-Asp, -Asn, -His and -Tyr). Catalysis occurs through a double-displacement mechanism. The nucleophile active site attacks the C1' of nucleotide 34 to detach the guanine base from the RNA, forming a covalent enzyme-RNA intermediate. The proton acceptor active site deprotonates the incoming PreQ1, allowing a nucleophilic attack on the C1' of the ribose to form the product. After dissociation, two additional enzymatic reactions on the tRNA convert PreQ1 to queuine (Q), resulting in the hypermodified nucleoside queuosine (7-(((4,5-cis-dihydroxy-2-cyclopenten-1-yl)amino)methyl)-7-deazaguanosine). The protein is Queuine tRNA-ribosyltransferase of Neisseria meningitidis serogroup B (strain ATCC BAA-335 / MC58).